Reading from the N-terminus, the 413-residue chain is uncharacterized protein (413 aa).

A run of 7 helical transmembrane segments spans residues 10–32 (GLTI…GRLP), 162–184 (VFLH…LVFL), 189–211 (LLPR…AFLV), 232–254 (LSFR…LFFF), 259–276 (YSYS…ILLV), 288–310 (ALMV…SFVT), and 325–347 (FAYA…SLIL).

Its subcellular location is the cell membrane. This is an uncharacterized protein from Aquifex aeolicus (strain VF5).